The chain runs to 250 residues: Cell division protein FtsQ (250 aa).

The Cytoplasmic portion of the chain corresponds to 1–11 (MWNNVRQLNLA). A helical transmembrane segment spans residues 12 to 32 (ASALYALLLLVLAAAGCYWLI). Residues 33–250 (QRPAFALREI…FLTDTDKGKK (218 aa)) lie on the Periplasmic side of the membrane. The POTRA domain occupies 37–106 (FALREIRIDG…NALAVTLEEY (70 aa)).

It belongs to the FtsQ/DivIB family. FtsQ subfamily. In terms of assembly, part of a complex composed of FtsB, FtsL and FtsQ.

It is found in the cell inner membrane. In terms of biological role, essential cell division protein. May link together the upstream cell division proteins, which are predominantly cytoplasmic, with the downstream cell division proteins, which are predominantly periplasmic. May control correct divisome assembly. The sequence is that of Cell division protein FtsQ from Burkholderia pseudomallei (strain K96243).